The chain runs to 635 residues: Glycosyltransferase-like protein gnt13 (635 aa).

At 1 to 18 (MNINTLIINFNKVKRMKN) the chain is on the cytoplasmic side. A helical; Signal-anchor for type II membrane protein transmembrane segment spans residues 19–38 (FLILTLLVVMVVVFLQGPTL). The Extracellular segment spans residues 39 to 635 (MINNSGQGMG…PNECFSDHHW (597 aa)). 2 N-linked (GlcNAc...) asparagine glycosylation sites follow: asparagine 41 and asparagine 179. 2 disordered regions span residues 300 to 358 (NINN…NNID) and 389 to 458 (NIDN…NNEP). Positions 389–456 (NIDNNNSNYN…NNNNNNNNNN (68 aa)) are enriched in low complexity. N-linked (GlcNAc...) asparagine glycans are attached at residues asparagine 393 and asparagine 535.

It belongs to the glycosyltransferase 8 family. Highly divergent.

The protein localises to the membrane. The sequence is that of Glycosyltransferase-like protein gnt13 (gnt13) from Dictyostelium discoideum (Social amoeba).